The sequence spans 140 residues: Nucleoside diphosphate kinase (140 aa).

ATP contacts are provided by Lys-11, Phe-59, Arg-87, Thr-93, Arg-104, and Asn-114. His-117 functions as the Pros-phosphohistidine intermediate in the catalytic mechanism.

The protein belongs to the NDK family. As to quaternary structure, homotetramer. The cofactor is Mg(2+).

It localises to the cytoplasm. It catalyses the reaction a 2'-deoxyribonucleoside 5'-diphosphate + ATP = a 2'-deoxyribonucleoside 5'-triphosphate + ADP. It carries out the reaction a ribonucleoside 5'-diphosphate + ATP = a ribonucleoside 5'-triphosphate + ADP. Its function is as follows. Major role in the synthesis of nucleoside triphosphates other than ATP. The ATP gamma phosphate is transferred to the NDP beta phosphate via a ping-pong mechanism, using a phosphorylated active-site intermediate. This chain is Nucleoside diphosphate kinase, found in Rickettsia prowazekii (strain Madrid E).